The primary structure comprises 339 residues: DNA-directed RNA polymerase subunit alpha (339 aa).

The interval 1-233 (MVREEVAGST…DLFLPFLHAE (233 aa)) is alpha N-terminal domain (alpha-NTD). Positions 264-339 (KKGIPLNCIF…IDLLKNKLSF (76 aa)) are alpha C-terminal domain (alpha-CTD).

It belongs to the RNA polymerase alpha chain family. As to quaternary structure, in plastids the minimal PEP RNA polymerase catalytic core is composed of four subunits: alpha, beta, beta', and beta''. When a (nuclear-encoded) sigma factor is associated with the core the holoenzyme is formed, which can initiate transcription.

The protein resides in the plastid. It is found in the chloroplast. It carries out the reaction RNA(n) + a ribonucleoside 5'-triphosphate = RNA(n+1) + diphosphate. In terms of biological role, DNA-dependent RNA polymerase catalyzes the transcription of DNA into RNA using the four ribonucleoside triphosphates as substrates. The chain is DNA-directed RNA polymerase subunit alpha from Bromus inermis (Smooth brome grass).